A 398-amino-acid chain; its full sequence is Acetate kinase (398 aa).

Position 10 (Asn10) interacts with Mg(2+). Lys17 lines the ATP pocket. Arg89 serves as a coordination point for substrate. The Proton donor/acceptor role is filled by Asp148. Residues 208–212 (HLGNG), 283–285 (DCR), and 331–335 (GIGEN) contribute to the ATP site. Residue Glu385 coordinates Mg(2+).

The protein belongs to the acetokinase family. In terms of assembly, homodimer. Mg(2+) is required as a cofactor. Mn(2+) serves as cofactor.

It is found in the cytoplasm. The enzyme catalyses acetate + ATP = acetyl phosphate + ADP. Its pathway is metabolic intermediate biosynthesis; acetyl-CoA biosynthesis; acetyl-CoA from acetate: step 1/2. Catalyzes the formation of acetyl phosphate from acetate and ATP. Can also catalyze the reverse reaction. This Histophilus somni (strain 2336) (Haemophilus somnus) protein is Acetate kinase.